The sequence spans 390 residues: MKFVDEAAILVVAGDGGNGCVSFRREKYIPNGGPDGGDGGDGGDIYLLADENLNTLIDYRFVKSFRAERGQNGQSRDCTGKRGKDITIKVPVGTRVLDQGTGEIVGDMVRHGQRLMVAKGGFHGLGNSRFKSSVNRAPRQKTMGTEGETRELMLELLLLADVGMLGLPNAGKSTFIRAVSAAKPKVADYPFTTLIPSLGVVRMDYEQSFVIADIPGLIEGASDGAGLGIRFLKHLERCRVLLHLVDLAPIDESDPAENAKVIVNELQQYSENLAEKPRWLVFNKIDLIDPEEAEKRAKAIVETLGWEGKYYMISAANRDNVNALCWDVMSFLNSQPKAMAIAESVPEKVEFMWDDYHREQLAEVEAEAEDDWDDDWDEEDDDGVEIIYER.

One can recognise an Obg domain in the interval 1-159 (MKFVDEAAIL…RELMLELLLL (159 aa)). In terms of domain architecture, OBG-type G spans 160–333 (ADVGMLGLPN…LCWDVMSFLN (174 aa)). Residues 166 to 173 (GLPNAGKS), 191 to 195 (FTTLI), 213 to 216 (DIPG), 283 to 286 (NKID), and 314 to 316 (SAA) each bind GTP. 2 residues coordinate Mg(2+): Ser173 and Thr193. Positions 364 to 384 (VEAEAEDDWDDDWDEEDDDGV) are enriched in acidic residues. Positions 364-390 (VEAEAEDDWDDDWDEEDDDGVEIIYER) are disordered.

Belongs to the TRAFAC class OBG-HflX-like GTPase superfamily. OBG GTPase family. In terms of assembly, monomer. It depends on Mg(2+) as a cofactor.

The protein localises to the cytoplasm. An essential GTPase which binds GTP, GDP and possibly (p)ppGpp with moderate affinity, with high nucleotide exchange rates and a fairly low GTP hydrolysis rate. Plays a role in control of the cell cycle, stress response, ribosome biogenesis and in those bacteria that undergo differentiation, in morphogenesis control. The protein is GTPase Obg of Yersinia pestis.